A 266-amino-acid chain; its full sequence is GTP cyclohydrolase III (266 aa).

Belongs to the archaeal-type GTP cyclohydrolase family.

The enzyme catalyses GTP + 3 H2O = 2-amino-5-formylamino-6-(5-phospho-D-ribosylamino)pyrimidin-4(3H)-one + 2 phosphate + 2 H(+). Functionally, catalyzes the formation of 2-amino-5-formylamino-6-ribofuranosylamino-4(3H)-pyrimidinone ribonucleotide monophosphate and inorganic phosphate from GTP. Also has an independent pyrophosphate phosphohydrolase activity. This Methanococcus maripaludis (strain C7 / ATCC BAA-1331) protein is GTP cyclohydrolase III.